The sequence spans 110 residues: Protein SPIRAL1-like 2 (110 aa).

Positions Ala-28 to Asn-110 are disordered. The span at Ala-40–Ala-52 shows a compositional bias: low complexity. A compositionally biased stretch (polar residues) spans Leu-63 to Phe-82. Ser-67 bears the Phosphoserine mark. Residues Pro-95–Asn-110 show a composition bias toward gly residues.

Belongs to the SPIRAL1 family. Ubiquitous.

Its function is as follows. Acts redundantly with SPR1 in maintaining the cortical microtubules organization essential for anisotropic cell growth. This is Protein SPIRAL1-like 2 (SP1L2) from Arabidopsis thaliana (Mouse-ear cress).